Here is a 313-residue protein sequence, read N- to C-terminus: Protein EMSY-LIKE 2 (313 aa).

Residues 1 to 88 (MEAQIHILEQ…HQSLDVHPSP (88 aa)) form the ENT domain. Positions 35–58 (MTNLRKELRISDDENRQLLNNVHN) form a coiled coil. Disordered stretches follow at residues 84 to 106 (VHPSPTFSASRKKQKTFQSYPSI) and 195 to 229 (LNVGHGGGTTRGNRRTLSHGGRGRGPRTQPRREHL). Over residues 206–219 (GNRRTLSHGGRGRG) the composition is skewed to basic residues. A coiled-coil region spans residues 267 to 293 (HELDKAKKLLKEHEQALIAAIARLTDA). A Phosphoserine modification is found at serine 294. The interval 294–313 (SDYESDGEEPYSHELPMLLG) is disordered.

As to quaternary structure, interacts with EDM2 in nucleus.

Its subcellular location is the nucleus. Its function is as follows. Probably involved in the regulation of chromatin states. Contributes to RPP7-mediated and basal immunity, especially against Hyaloperonospora arabidopsidis isolate Hiks1. Regulates negatively EDM2-dependent floral transition. This Arabidopsis thaliana (Mouse-ear cress) protein is Protein EMSY-LIKE 2.